We begin with the raw amino-acid sequence, 429 residues long: Enolase (429 aa).

Q163 serves as a coordination point for (2R)-2-phosphoglycerate. Residue E205 is the Proton donor of the active site. The Mg(2+) site is built by D242, E287, and D314. (2R)-2-phosphoglycerate-binding residues include K339, R368, S369, and K390. K339 serves as the catalytic Proton acceptor.

This sequence belongs to the enolase family. Requires Mg(2+) as cofactor.

It is found in the cytoplasm. The protein localises to the secreted. It localises to the cell surface. The catalysed reaction is (2R)-2-phosphoglycerate = phosphoenolpyruvate + H2O. The protein operates within carbohydrate degradation; glycolysis; pyruvate from D-glyceraldehyde 3-phosphate: step 4/5. Functionally, catalyzes the reversible conversion of 2-phosphoglycerate (2-PG) into phosphoenolpyruvate (PEP). It is essential for the degradation of carbohydrates via glycolysis. This chain is Enolase, found in Salinibacter ruber (strain DSM 13855 / M31).